Reading from the N-terminus, the 478-residue chain is MSPQTETKASVGFKAGVKEYKLTYYTPEYETKDTDILAAFRVTPQPGVPPEEAGAAVAAESSTGTWTTVWTDGLTSLDRYKGRCYHIEPVPGEETQFIAYVAYPLDLFEEGSVTNMFTSIVGNVFGFKALAALRLEDLRIPPAYTKTFQGPPHGIQVERDKLNKYGRPLLGCTIKPKLGLSAKNYGRAVYECLRGGLDFTKDDENVNSQPFMRWRDRFLFCAEAIYKSQAETGEIKGHYLNATAGTCEEMIKRAVFARELGVPIVMHDYLTGGFTANTSLAHYCRDNGLLLHIHRAMHAVIDRQKNHGMHFRVLAKALRLSGGDHIHAGTVVGKLEGDRESTLGFVDLLRDDYVEKDRSRGIFFTQDWVSLPGVLPVASGGIHVWHMPALTEIFGDDSVLHFGGGTLGHPWGNAPGAVANRVALEACVQARNEGRDLAVEGNEIVREACKWSPELAAACEVWKEIRFNFPTIDKLDGQ.

A propeptide spanning residues 1 to 2 (MS) is cleaved from the precursor. Positions 123 and 173 each coordinate substrate. Lys175 functions as the Proton acceptor in the catalytic mechanism. Residue Lys177 coordinates substrate. The Mg(2+) site is built by Lys201, Asp203, and Glu204. Lys201 bears the N6-carboxylysine mark. Ser208 carries the phosphoserine modification. The Proton acceptor role is filled by His294. 2 residues coordinate substrate: Arg295 and His327. Thr330 is modified (phosphothreonine). Ser379 provides a ligand contact to substrate.

Belongs to the RuBisCO large chain family. Type I subfamily. In terms of assembly, heterohexadecamer of 8 large chains and 8 small chains; disulfide-linked. The disulfide link is formed within the large subunit homodimers. The cofactor is Mg(2+). The disulfide bond which can form in the large chain dimeric partners within the hexadecamer appears to be associated with oxidative stress and protein turnover.

It is found in the plastid. The protein localises to the chloroplast. The catalysed reaction is 2 (2R)-3-phosphoglycerate + 2 H(+) = D-ribulose 1,5-bisphosphate + CO2 + H2O. It carries out the reaction D-ribulose 1,5-bisphosphate + O2 = 2-phosphoglycolate + (2R)-3-phosphoglycerate + 2 H(+). Its function is as follows. RuBisCO catalyzes two reactions: the carboxylation of D-ribulose 1,5-bisphosphate, the primary event in carbon dioxide fixation, as well as the oxidative fragmentation of the pentose substrate in the photorespiration process. Both reactions occur simultaneously and in competition at the same active site. This chain is Ribulose bisphosphate carboxylase large chain, found in Lepidium virginicum (Virginia pepperweed).